The sequence spans 596 residues: Clathrin heavy chain linker domain-containing protein 1 (596 aa).

The stretch at 129–241 forms a coiled coil; the sequence is QLEAKMRIIE…RDIAENLKKD (113 aa).

The sequence is that of Clathrin heavy chain linker domain-containing protein 1 (Clhc1) from Mus musculus (Mouse).